Consider the following 556-residue polypeptide: Fiber protein (556 aa).

The disordered stretch occupies residues methionine 1 to tyrosine 22.

This sequence belongs to the adenoviridae fiber family. As to quaternary structure, homotrimer. Interacts with host receptor CXCAR. Interacts (via N-terminal tail region) with pentons.

It localises to the virion. It is found in the host nucleus. Forms spikes that protrude from each vertex of the icosahedral capsid. Interacts with host receptor CXCAR to provide virion initial attachment to target cell. Fiber proteins are shed during virus entry, when virus is still at the cell surface. This Human adenovirus A serotype 31 (HAdV-31) protein is Fiber protein.